Consider the following 643-residue polypeptide: Thioredoxin reductase 3 (643 aa).

The segment at 1 to 53 (MERSPPQSPGPGKAGDAPNRRSGHVRGARVLSPPGRRARLSSPGPSRSSEARE) is disordered. Arginine 26 carries the asymmetric dimethylarginine; alternate modification. Residue arginine 26 is modified to Omega-N-methylarginine; alternate. Residues serine 41 and serine 42 each carry the phosphoserine modification. The Glutaredoxin domain occupies 56-156 (RRHLVGLIER…KLLQEDLAYD (101 aa)). Position 158-187 (158-187 (DLIIIGGGSGGLSCAKEAAILGKKVMVLDF)) interacts with FAD. An intrachain disulfide couples cysteine 203 to cysteine 208. N6-succinyllysine is present on lysine 379. Histidine 616 serves as the catalytic Proton acceptor. The segment at residues 641-642 (CU) is a cross-link (cysteinyl-selenocysteine (Cys-Sec)). A non-standard amino acid (selenocysteine) is located at residue selenocysteine 642.

It belongs to the class-I pyridine nucleotide-disulfide oxidoreductase family. In terms of assembly, homodimer. FAD is required as a cofactor.

It localises to the cytoplasm. The protein localises to the nucleus. It is found in the microsome. Its subcellular location is the endoplasmic reticulum. The enzyme catalyses [thioredoxin]-dithiol + NADP(+) = [thioredoxin]-disulfide + NADPH + H(+). Displays thioredoxin reductase, glutaredoxin and glutathione reductase activities. Catalyzes disulfide bond isomerization. Promotes disulfide bond formation between GPX4 and various sperm proteins and may play a role in sperm maturation by promoting formation of sperm structural components. This is Thioredoxin reductase 3 from Homo sapiens (Human).